The sequence spans 843 residues: Protein P (843 aa).

Positions 1–177 are terminal protein domain (TP); sequence MPLSYQHFRK…FCGSPYSWEQ (177 aa). The tract at residues 178-346 is spacer; the sequence is ELQHGRLVFQ…YCLTHIVNLL (169 aa). Disordered regions lie at residues 224–273 and 288–316; these read GLQP…SSTS and HLST…RSQS. The segment covering 288-299 has biased composition (polar residues); the sequence is HLSTSKRQSSSG. The polymerase/reverse transcriptase domain (RT) stretch occupies residues 347–690; it reads EDWGPCTEHG…YLNLYPVARQ (344 aa). The Reverse transcriptase domain maps to 357–600; sequence EHNIRIPRTP…YSLNFMGYVI (244 aa). Residues Asp-429, Asp-551, and Asp-552 each contribute to the Mg(2+) site.

Belongs to the hepadnaviridae P protein family.

The enzyme catalyses DNA(n) + a 2'-deoxyribonucleoside 5'-triphosphate = DNA(n+1) + diphosphate. It catalyses the reaction Endonucleolytic cleavage to 5'-phosphomonoester.. Activated by host HSP70 and HSP40 in vitro to be able to bind the epsilon loop of the pgRNA. Because deletion of the RNase H region renders the protein partly chaperone-independent, the chaperones may be needed indirectly to relieve occlusion of the RNA-binding site by this domain. Inhibited by several reverse-transcriptase inhibitors: Lamivudine, Adefovir and Entecavir. Functionally, multifunctional enzyme that converts the viral RNA genome into dsDNA in viral cytoplasmic capsids. This enzyme displays a DNA polymerase activity that can copy either DNA or RNA templates, and a ribonuclease H (RNase H) activity that cleaves the RNA strand of RNA-DNA heteroduplexes in a partially processive 3'- to 5'-endonucleasic mode. Neo-synthesized pregenomic RNA (pgRNA) are encapsidated together with the P protein, and reverse-transcribed inside the nucleocapsid. Initiation of reverse-transcription occurs first by binding the epsilon loop on the pgRNA genome, and is initiated by protein priming, thereby the 5'-end of (-)DNA is covalently linked to P protein. Partial (+)DNA is synthesized from the (-)DNA template and generates the relaxed circular DNA (RC-DNA) genome. After budding and infection, the RC-DNA migrates in the nucleus, and is converted into a plasmid-like covalently closed circular DNA (cccDNA). The activity of P protein does not seem to be necessary for cccDNA generation, and is presumably released from (+)DNA by host nuclear DNA repair machinery. This Homo sapiens (Human) protein is Protein P.